The primary structure comprises 534 residues: ATP synthase subunit alpha (534 aa).

170-177 provides a ligand contact to ATP; the sequence is GDRQTGKT. The segment at 505 to 534 is disordered; the sequence is HEDARVKSETAQAAGKDKDEKAAATAGAGK.

It belongs to the ATPase alpha/beta chains family. As to quaternary structure, F-type ATPases have 2 components, CF(1) - the catalytic core - and CF(0) - the membrane proton channel. CF(1) has five subunits: alpha(3), beta(3), gamma(1), delta(1), epsilon(1). CF(0) has three main subunits: a(1), b(2) and c(9-12). The alpha and beta chains form an alternating ring which encloses part of the gamma chain. CF(1) is attached to CF(0) by a central stalk formed by the gamma and epsilon chains, while a peripheral stalk is formed by the delta and b chains.

It is found in the cell inner membrane. The catalysed reaction is ATP + H2O + 4 H(+)(in) = ADP + phosphate + 5 H(+)(out). Its function is as follows. Produces ATP from ADP in the presence of a proton gradient across the membrane. The alpha chain is a regulatory subunit. This Acidobacterium capsulatum (strain ATCC 51196 / DSM 11244 / BCRC 80197 / JCM 7670 / NBRC 15755 / NCIMB 13165 / 161) protein is ATP synthase subunit alpha.